The following is a 258-amino-acid chain: Aspartate/glutamate leucyltransferase (258 aa).

This sequence belongs to the R-transferase family. Bpt subfamily.

The protein localises to the cytoplasm. It catalyses the reaction N-terminal L-glutamyl-[protein] + L-leucyl-tRNA(Leu) = N-terminal L-leucyl-L-glutamyl-[protein] + tRNA(Leu) + H(+). The catalysed reaction is N-terminal L-aspartyl-[protein] + L-leucyl-tRNA(Leu) = N-terminal L-leucyl-L-aspartyl-[protein] + tRNA(Leu) + H(+). Functions in the N-end rule pathway of protein degradation where it conjugates Leu from its aminoacyl-tRNA to the N-termini of proteins containing an N-terminal aspartate or glutamate. In Rhodopseudomonas palustris (strain ATCC BAA-98 / CGA009), this protein is Aspartate/glutamate leucyltransferase.